We begin with the raw amino-acid sequence, 418 residues long: Putative O-antigen transporter (418 aa).

11 helical membrane passes run 8 to 28 (VWNL…LGFL), 37 to 57 (FGVY…DVGL), 85 to 105 (FLVL…DGIV), 124 to 144 (LLAI…ILEG), 165 to 185 (IPAI…GLIF), 217 to 237 (LFFF…MVYF), 251 to 271 (VAFY…PAAI), 297 to 317 (LLMF…SGLV), 334 to 354 (LNVL…FSAI), 362 to 382 (ITAL…YFMV), and 385 to 405 (YGLL…ALLL).

This sequence belongs to the polysaccharide synthase family.

It localises to the cell inner membrane. It functions in the pathway bacterial outer membrane biogenesis; lipopolysaccharide biosynthesis. Its function is as follows. Could be an O-antigen transporter. This is Putative O-antigen transporter (rfbE) from Shigella flexneri.